The following is a 1091-amino-acid chain: Sodium/potassium exporting P-type ATPase 1 (1091 aa).

The Cytoplasmic segment spans residues 1–63; the sequence is MGEGTTKENN…LGDDTKIDYK (63 aa). Residues 64-84 form a helical membrane-spanning segment; the sequence is AMVLHQVCNAMIMVLLISMII. The Extracellular segment spans residues 85 to 90; it reads SFAMHD. Residues 91–111 traverse the membrane as a helical segment; sequence WITGGVISFVIAVNVLIGLVQ. Over 112 to 282 the chain is Cytoplasmic; sequence EYKATKTMNS…TNVGTPLHRK (171 aa). Residues 283 to 303 form a helical membrane-spanning segment; sequence LSKLAVLLFWIAVLFAIIVMA. At 304–312 the chain is on the extracellular side; that stretch reads SQKFDVDKR. Residues 313-333 form a helical membrane-spanning segment; sequence VAIYAICVALSMIPSSLVVVL. The Cytoplasmic portion of the chain corresponds to 334–815; that stretch reads TITMSVGAAV…RRMTDNIQKF (482 aa). D369 (4-aspartylphosphate intermediate) is an active-site residue. 2 residues coordinate Mg(2+): D369 and T371. ATP is bound by residues T371 and E483. Residues 499 to 525 are disordered; the sequence is ALTGEKSTNQSNENDQSSLSQHNEKPG. Over residues 503 to 519 the composition is skewed to polar residues; the sequence is EKSTNQSNENDQSSLSQ. ATP is bound by residues K561, R606, T673, G674, D675, R732, and K738. Residue D757 coordinates Mg(2+). N760 serves as a coordination point for ATP. The helical transmembrane segment at 816–836 threads the bilayer; sequence VLQLLAENVAQALYLIIGLVF. Topologically, residues 837–848 are extracellular; sequence RDENGKSVFPLS. A helical membrane pass occupies residues 849–869; sequence PVEVLWIIVVTSCFPAMGLGL. Topologically, residues 870–885 are cytoplasmic; sequence EKAAPDLMDRPPHDSE. A helical transmembrane segment spans residues 886 to 906; sequence VGIFTWEVIIDTFAYGIIMTG. The Extracellular segment spans residues 907–943; that stretch reads SCMASFTGSLYGINSGRLGHDCDGTYNSSCRDVYRSR. A helical membrane pass occupies residues 944–964; sequence SAAFATMTWCALILAWEVVDM. The Cytoplasmic segment spans residues 965–991; it reads RRSFFRMHPDTDSPVKEFFRSIWGNQF. The helical transmembrane segment at 992 to 1012 threads the bilayer; the sequence is LFWSIIFGFVSAFPVVYIPVI. At 1013-1021 the chain is on the extracellular side; that stretch reads NDKVFLHKP. Residues 1022 to 1042 traverse the membrane as a helical segment; sequence IGAEWGLAIAFTIAFWIGAEL. Over 1043-1091 the chain is Cytoplasmic; the sequence is YKCGKRRYFKTQRAHNPENDLESNNKRDPFEAYSTSTTIHTEVNIGIKQ.

Belongs to the cation transport ATPase (P-type) (TC 3.A.3) family. Type IID subfamily. The cofactor is Mg(2+). The active site is phosphorylated in presence of sodium or potassium and in conditions of higher pH. Not phosphorylated in presence of calcium ions.

Its subcellular location is the cell membrane. The enzyme catalyses Na(+)(in) + ATP + H2O = Na(+)(out) + ADP + phosphate + H(+). It carries out the reaction K(+)(in) + ATP + H2O = K(+)(out) + ADP + phosphate + H(+). Its function is as follows. Catalyzes the hydrolysis of ATP coupled with the export of sodium and potassium from the cell. May export potassium less efficiently. May transport other cations such as lithium. Sodium/potassium efflux ATPases are involved in salt tolerance and maintaining the membrane potential across the plasma membrane in high salinity (Na+) or alkaline (K+) environments. Is negatively modulated by SIS2/HAL3. This chain is Sodium/potassium exporting P-type ATPase 1, found in Saccharomyces cerevisiae (strain ATCC 204508 / S288c) (Baker's yeast).